We begin with the raw amino-acid sequence, 118 residues long: Large ribosomal subunit protein uL18 (118 aa).

The interval 1–20 (MISKPDKNKKRQRRHARVRS) is disordered. Positions 7 to 20 (KNKKRQRRHARVRS) are enriched in basic residues.

This sequence belongs to the universal ribosomal protein uL18 family. In terms of assembly, part of the 50S ribosomal subunit; part of the 5S rRNA/L5/L18/L25 subcomplex. Contacts the 5S and 23S rRNAs.

In terms of biological role, this is one of the proteins that bind and probably mediate the attachment of the 5S RNA into the large ribosomal subunit, where it forms part of the central protuberance. The chain is Large ribosomal subunit protein uL18 from Pediococcus pentosaceus (strain ATCC 25745 / CCUG 21536 / LMG 10740 / 183-1w).